The primary structure comprises 434 residues: Glutamyl-tRNA reductase (434 aa).

Residues 54–57 (TCNR), Ser-113, 118–120 (EAQ), and Gln-124 contribute to the substrate site. The Nucleophile role is filled by Cys-55. 193–198 (GGGEVS) is an NADP(+) binding site.

It belongs to the glutamyl-tRNA reductase family. As to quaternary structure, homodimer.

The catalysed reaction is (S)-4-amino-5-oxopentanoate + tRNA(Glu) + NADP(+) = L-glutamyl-tRNA(Glu) + NADPH + H(+). It functions in the pathway porphyrin-containing compound metabolism; protoporphyrin-IX biosynthesis; 5-aminolevulinate from L-glutamyl-tRNA(Glu): step 1/2. Its pathway is porphyrin-containing compound metabolism; chlorophyll biosynthesis. Catalyzes the NADPH-dependent reduction of glutamyl-tRNA(Glu) to glutamate 1-semialdehyde (GSA). This is Glutamyl-tRNA reductase from Chloroflexus aurantiacus (strain ATCC 29366 / DSM 635 / J-10-fl).